The chain runs to 237 residues: Ribonuclease PH (237 aa).

Phosphate is bound by residues Arg-86 and 124-126 (GTR).

This sequence belongs to the RNase PH family. In terms of assembly, homohexameric ring arranged as a trimer of dimers.

The enzyme catalyses tRNA(n+1) + phosphate = tRNA(n) + a ribonucleoside 5'-diphosphate. In terms of biological role, phosphorolytic 3'-5' exoribonuclease that plays an important role in tRNA 3'-end maturation. Removes nucleotide residues following the 3'-CCA terminus of tRNAs; can also add nucleotides to the ends of RNA molecules by using nucleoside diphosphates as substrates, but this may not be physiologically important. Probably plays a role in initiation of 16S rRNA degradation (leading to ribosome degradation) during starvation. In Coxiella burnetii (strain RSA 331 / Henzerling II), this protein is Ribonuclease PH.